A 550-amino-acid polypeptide reads, in one-letter code: MSAAWIPALGLGVCLLLLPGPAGSEGAAPIAITCFTRGLDIRKEKADVLCPGGCPLEEFSVYGNIVYASVSSICGAAVHRGVISNSGGPVRVYSLPGRENYSSVDANGIQSQMLSRWSASFTVTKGKSSTQEATGQAVSTAHPPTGKRLKKTPEKKTGNKDCKADIAFLIDGSFNIGQRRFNLQKNFVGKVALMLGIGTEGPHVGLVQASEHPKIEFYLKNFTSAKDVLFAIKEVGFRGGNSNTGKALKHTAQKFFTVDAGVRKGIPKVVVVFIDGWPSDDIEEAGIVAREFGVNVFIVSVAKPIPEELGMVQDVTFVDKAVCRNNGFFSYHMPNWFGTTKYVKPLVQKLCTHEQMMCSKTCYNSVNIAFLIDGSSSVGDSNFRLMLEFVSNIAKTFEISDIGAKIAAVQFTYDQRTEFSFTDYSTKENVLAVIRNIRYMSGGTATGDAISFTVRNVFGPIRESPNKNFLVIVTDGQSYDDVQGPAAAAHDAGITIFSVGVAWAPLDDLKDMASKPKESHAFFTREFTGLEPIVSDVIRGICRDFLESQQ.

A signal peptide spans M1–S24. The 94-residue stretch at A28 to F121 folds into the LCCL domain. Disulfide bonds link C34–C50 and C54–C74. N100 carries an N-linked (GlcNAc...) asparagine glycan. Residues S128–S139 are compositionally biased toward polar residues. Positions S128 to N159 are disordered. VWFA domains lie at D165 to L346 and N367 to V537. The N-linked (GlcNAc...) asparagine glycan is linked to N221.

As to quaternary structure, monomer. May form homodimer. Interacts with type II collagen. Interacts with SLC44A2. Interacts with ANXA2. Post-translationally, N-glycosylated. A 50 kDa form is created by proteolytic cleavage. Expressed in inner ear structures; the cochlea and the vestibule.

The protein resides in the secreted. It localises to the extracellular space. Its subcellular location is the extracellular matrix. Its function is as follows. Plays a role in the control of cell shape and motility in the trabecular meshwork. The protein is Cochlin (COCH) of Homo sapiens (Human).